Consider the following 187-residue polypeptide: Elongation factor P (187 aa).

This sequence belongs to the elongation factor P family.

The protein localises to the cytoplasm. The protein operates within protein biosynthesis; polypeptide chain elongation. Its function is as follows. Involved in peptide bond synthesis. Stimulates efficient translation and peptide-bond synthesis on native or reconstituted 70S ribosomes in vitro. Probably functions indirectly by altering the affinity of the ribosome for aminoacyl-tRNA, thus increasing their reactivity as acceptors for peptidyl transferase. This is Elongation factor P from Clavibacter michiganensis subsp. michiganensis (strain NCPPB 382).